A 338-amino-acid chain; its full sequence is Methionine import ATP-binding protein MetN 2 (338 aa).

Residues 2 to 242 form the ABC transporter domain; the sequence is IEIEKVCVDF…PQHAFTQQLV (241 aa). ATP is bound at residue 39-46; sequence GTSGAGKS.

Belongs to the ABC transporter superfamily. Methionine importer (TC 3.A.1.24) family. As to quaternary structure, the complex is composed of two ATP-binding proteins (MetN), two transmembrane proteins (MetI) and a solute-binding protein (MetQ).

It localises to the cell inner membrane. The enzyme catalyses L-methionine(out) + ATP + H2O = L-methionine(in) + ADP + phosphate + H(+). It carries out the reaction D-methionine(out) + ATP + H2O = D-methionine(in) + ADP + phosphate + H(+). Its function is as follows. Part of the ABC transporter complex MetNIQ involved in methionine import. Responsible for energy coupling to the transport system. In Salmonella typhi, this protein is Methionine import ATP-binding protein MetN 2.